The following is a 100-amino-acid chain: NADH-quinone oxidoreductase subunit K (100 aa).

3 consecutive transmembrane segments (helical) span residues 4–24 (MQHGLILAAILFTLGLTGLLI), 28–48 (LIFMLISLEVMINSAALAWVV), and 60–80 (IFYLLAITLAAAEASIGLALL).

The protein belongs to the complex I subunit 4L family. In terms of assembly, NDH-1 is composed of 13 different subunits. Subunits NuoA, H, J, K, L, M, N constitute the membrane sector of the complex.

Its subcellular location is the cell membrane. The enzyme catalyses a quinone + NADH + 5 H(+)(in) = a quinol + NAD(+) + 4 H(+)(out). Its function is as follows. NDH-1 shuttles electrons from NADH, via FMN and iron-sulfur (Fe-S) centers, to quinones in the respiratory chain. The immediate electron acceptor for the enzyme in this species is believed to be ubiquinone. Couples the redox reaction to proton translocation (for every two electrons transferred, four hydrogen ions are translocated across the cytoplasmic membrane), and thus conserves the redox energy in a proton gradient. The polypeptide is NADH-quinone oxidoreductase subunit K (Hamiltonella defensa subsp. Acyrthosiphon pisum (strain 5AT)).